A 218-amino-acid polypeptide reads, in one-letter code: Eukaryotic translation initiation factor 3 subunit K (218 aa).

The PCI domain occupies Y42–K204.

The protein belongs to the eIF-3 subunit K family. In terms of assembly, component of the eukaryotic translation initiation factor 3 (eIF-3) complex, which is composed of 13 subunits: eif3a, eif3b, eif3c, eif3d, eif3e, eif3f, eif3g, eif3h, eif3i, eif3j, eif3k, eif3l and eif3m.

Its subcellular location is the nucleus. The protein resides in the cytoplasm. In terms of biological role, component of the eukaryotic translation initiation factor 3 (eIF-3) complex, which is involved in protein synthesis of a specialized repertoire of mRNAs and, together with other initiation factors, stimulates binding of mRNA and methionyl-tRNAi to the 40S ribosome. The eIF-3 complex specifically targets and initiates translation of a subset of mRNAs involved in cell proliferation. The sequence is that of Eukaryotic translation initiation factor 3 subunit K (eif3k) from Xenopus tropicalis (Western clawed frog).